Here is a 188-residue protein sequence, read N- to C-terminus: Inosine triphosphate pyrophosphatase (188 aa).

Position 11-16 (11-16 (TGNKHK)) interacts with ITP. Residue Glu39 coordinates Mg(2+). ITP is bound by residues Lys51, 67–68 (DT), Lys84, 143–146 (FGWN), and 171–172 (HR).

Belongs to the HAM1 NTPase family. Homodimer. Mg(2+) serves as cofactor. It depends on Mn(2+) as a cofactor.

The protein resides in the cytoplasm. It localises to the nucleus. It catalyses the reaction ITP + H2O = IMP + diphosphate + H(+). The catalysed reaction is dITP + H2O = dIMP + diphosphate + H(+). The enzyme catalyses XTP + H2O = XMP + diphosphate + H(+). In terms of biological role, pyrophosphatase that hydrolyzes non-canonical purine nucleotides such as inosine triphosphate (ITP), deoxyinosine triphosphate (dITP) or xanthosine 5'-triphosphate (XTP) to their respective monophosphate derivatives. The enzyme does not distinguish between the deoxy- and ribose forms. Probably excludes non-canonical purines from RNA and DNA precursor pools, thus preventing their incorporation into RNA and DNA and avoiding chromosomal lesions. This is Inosine triphosphate pyrophosphatase from Schizosaccharomyces pombe (strain 972 / ATCC 24843) (Fission yeast).